The sequence spans 126 residues: Large ribosomal subunit protein bL12 (126 aa).

The protein belongs to the bacterial ribosomal protein bL12 family. As to quaternary structure, homodimer. Part of the ribosomal stalk of the 50S ribosomal subunit. Forms a multimeric L10(L12)X complex, where L10 forms an elongated spine to which 2 to 4 L12 dimers bind in a sequential fashion. Binds GTP-bound translation factors.

Functionally, forms part of the ribosomal stalk which helps the ribosome interact with GTP-bound translation factors. Is thus essential for accurate translation. In Blochmanniella floridana, this protein is Large ribosomal subunit protein bL12.